The primary structure comprises 164 residues: Respiratory growth induced protein 2 (164 aa).

This sequence belongs to the RGI1 family.

The protein resides in the cytoplasm. Its function is as follows. Involved in the control of energetic metabolism and significantly contribute to cell fitness, especially under respiratory growth conditions. This is Respiratory growth induced protein 2 (RGI2) from Candida glabrata (strain ATCC 2001 / BCRC 20586 / JCM 3761 / NBRC 0622 / NRRL Y-65 / CBS 138) (Yeast).